The sequence spans 145 residues: Phospholipase A2 phospholipin (145 aa).

A signal peptide spans 1–15; it reads MVDLARRCSGSTEGR. 3 residues coordinate Ca(2+): Trp-24, Gly-26, and Gly-28. 5 cysteine pairs are disulfide-bonded: Cys-25-Cys-46, Cys-45-Cys-84, Cys-52-Cys-77, Cys-75-Cys-116, and Cys-121-Cys-132. The active site involves His-49. Asp-50 lines the Ca(2+) pocket. The propeptide occupies 124–128; sequence KRSGR.

It belongs to the phospholipase A2 family. Group III subfamily. As to quaternary structure, heterodimer composed of a small subunit and a large subunit; disulfid-linked. Ca(2+) is required as a cofactor. Expressed by the venom gland.

It is found in the secreted. The enzyme catalyses a 1,2-diacyl-sn-glycero-3-phosphocholine + H2O = a 1-acyl-sn-glycero-3-phosphocholine + a fatty acid + H(+). Functionally, scorpion venom phospholipase A2 (PLA2) that contains enzymatic activity, but does not inhibit ryanodine receptors in contrary to imperatoxin-1, another heterodimer of P.imperator venom. PLA2 catalyzes the calcium-dependent hydrolysis of the 2-acyl groups in 3-sn-phosphoglycerides. The sequence is that of Phospholipase A2 phospholipin from Pandinus imperator (Emperor scorpion).